The chain runs to 808 residues: uncharacterized protein (808 aa).

35–42 (GPNNVGKT) is a binding site for ATP.

This is an uncharacterized protein from Methanocaldococcus jannaschii (strain ATCC 43067 / DSM 2661 / JAL-1 / JCM 10045 / NBRC 100440) (Methanococcus jannaschii).